A 1139-amino-acid polypeptide reads, in one-letter code: Sterol regulatory element-binding protein 2 (1139 aa).

The transcriptional activation (acidic) stretch occupies residues 1 to 50 (MDESSELGGLETMDTLTELGDELTLGDIDEMLQFVSNQVGEFPDLFSEQL). The Cytoplasmic portion of the chain corresponds to 1–479 (MDESSELGGL…VALGMVDRSR (479 aa)). Disordered regions lie at residues 48–104 (EQLC…SPST) and 119–143 (TPPR…SAQL). Low complexity predominate over residues 61-77 (GSSSSSNSSSSSGSNSR). Polar residues predominate over residues 90–104 (RSFSQVPLPTFSPST). The segment covering 119–138 (TPPRATPVLQPRPQPQPQPQ) has biased composition (pro residues). Positions 235–489 (QQVPVLVQPQ…ILLCVLTFLG (255 aa)) are interaction with LMNA. The region spanning 328–378 (ERRTTHNIIEKRYRSSINDKIIELKDLVMGTDAKMHKSGVLRKAIDYIKYL) is the bHLH domain. The tract at residues 378–399 (LQQVNHKLRQENMVLKLANQKN) is leucine-zipper. Lys-462 is covalently cross-linked (Glycyl lysine isopeptide (Lys-Gly) (interchain with G-Cter in SUMO2)). Residues 480–500 (ILLCVLTFLGLSFSPLTSLLQ) traverse the membrane as a helical segment. At 501-531 (WGGAHDTDQHPYSGSGRSVLSLESGSGGWFD) the chain is on the lumenal side. The chain crosses the membrane as a helical span at residues 532-552 (WMMPTLLLWLVNGVIVLSVFV). Residues 553–1139 (KLLVHGEPVI…LGGGTAIAAS (587 aa)) are Cytoplasmic-facing. Phosphoserine is present on Ser-1096.

It belongs to the SREBP family. In terms of assembly, homodimer; efficient DNA binding of the soluble transcription factor fragment requires dimerization with another bHLH protein. Interacts with LMNA. Forms a tight complex with SCAP, the SCAP-SREBP complex, in the endoplasmic reticulum membrane and the Golgi apparatus. Interacts with PAQR3; the interaction anchors the SCAP-SREBP complex to the Golgi apparatus in low cholesterol conditions. Interacts (via C-terminal domain) with RNF139. Processed in the Golgi apparatus, releasing the protein from the membrane. At low cholesterol the SCAP-SREBP complex is recruited into COPII vesicles for export from the endoplasmic reticulum. In the Golgi, complex SREBPs are cleaved sequentially by site-1 (MBTPS1, S1P) and site-2 (MBTPS2, S2P) proteases. The first cleavage by site-1 protease occurs within the luminal loop, the second cleavage by site-2 protease occurs within the first transmembrane domain, releasing the transcription factor from the Golgi membrane. Apoptosis triggers cleavage by the cysteine proteases caspase-3 and caspase-7. Cleavage and activation is induced by mediated cholesterol efflux. Post-translationally, phosphorylated by AMPK, leading to suppress protein processing and nuclear translocation, and repress target gene expression. In terms of processing, SCAP-free SREBF2 is ubiquitinated by the BCR(ARMC5) complex, leading to its degradation. Ubiquitinated; the nuclear form has a rapid turnover and is rapidly ubiquitinated and degraded by the proteasome in the nucleus.

It is found in the endoplasmic reticulum membrane. Its subcellular location is the golgi apparatus membrane. The protein localises to the cytoplasmic vesicle. The protein resides in the COPII-coated vesicle membrane. It localises to the nucleus. Activation by cleavage is down-regulated upon activation of SIRT3-dependent PRKAA1/AMPK-alpha signaling cascade which leads to inhibition of ATP-consuming lipogenesis to restore cellular energy balance. Precursor of the transcription factor form (Processed sterol regulatory element-binding protein 2), which is embedded in the endoplasmic reticulum membrane. Low sterol concentrations promote processing of this form, releasing the transcription factor form that translocates into the nucleus and activates transcription of genes involved in cholesterol biosynthesis. Its function is as follows. Key transcription factor that regulates expression of genes involved in cholesterol biosynthesis. Binds to the sterol regulatory element 1 (SRE-1) (5'-ATCACCCCAC-3'). Has dual sequence specificity binding to both an E-box motif (5'-ATCACGTGA-3') and to SRE-1 (5'-ATCACCCCAC-3'). Regulates transcription of genes related to cholesterol synthesis pathway. The chain is Sterol regulatory element-binding protein 2 (SREBF2) from Cricetulus griseus (Chinese hamster).